The chain runs to 129 residues: Small ribosomal subunit protein uS8 (129 aa).

It belongs to the universal ribosomal protein uS8 family. In terms of assembly, part of the 30S ribosomal subunit. Contacts proteins S5 and S12.

In terms of biological role, one of the primary rRNA binding proteins, it binds directly to 16S rRNA central domain where it helps coordinate assembly of the platform of the 30S subunit. The chain is Small ribosomal subunit protein uS8 from Legionella pneumophila (strain Corby).